A 325-amino-acid chain; its full sequence is MGFVKVVKNKQYFKRYQVRFRRRREGKTDYYARKRLIFQDKNKYNTPKFRLIVRLSNRDITCQIAYARIEGDRIVCAAYSHELPRYGVKVGLTNYAAAYCTGLLVARRILQKLRLDTLYAGCTDVTGEEYLVEPVDEGPAAFRCYLDVGLARTTTGARVFGAMKGAVDGGLNIPHSVKRFPGYSAENKSFNAEMHRDHIFGLHVANYMRTLEEEDEEAFKRQFSKYISLGIKADDIENIYKNAHASIRIPPSRRNPRRRSPRSGGRWPSCRSPPARRRSRSTRPTSWPRSRPTSKPKRPRRRRPFFFSSWWCIILVLPCSSPVRR.

A disordered region spans residues 247–300; the sequence is IRIPPSRRNPRRRSPRSGGRWPSCRSPPARRRSRSTRPTSWPRSRPTSKPKRPR. Low complexity-rich tracts occupy residues 262–273 and 282–291; these read RSGGRWPSCRSP and TRPTSWPRSR.

This sequence belongs to the universal ribosomal protein uL18 family. Component of the large ribosomal subunit (LSU).

The protein localises to the cytoplasm. It localises to the nucleus. Its function is as follows. Component of the ribosome, a large ribonucleoprotein complex responsible for the synthesis of proteins in the cell. The small ribosomal subunit (SSU) binds messenger RNAs (mRNAs) and translates the encoded message by selecting cognate aminoacyl-transfer RNA (tRNA) molecules. The large subunit (LSU) contains the ribosomal catalytic site termed the peptidyl transferase center (PTC), which catalyzes the formation of peptide bonds, thereby polymerizing the amino acids delivered by tRNAs into a polypeptide chain. The nascent polypeptides leave the ribosome through a tunnel in the LSU and interact with protein factors that function in enzymatic processing, targeting, and the membrane insertion of nascent chains at the exit of the ribosomal tunnel. The chain is Large ribosomal subunit protein uL18 (RpL5) from Anopheles gambiae (African malaria mosquito).